The chain runs to 321 residues: Tetraacyldisaccharide 4'-kinase (321 aa).

54–61 (SVGGTGKT) is a binding site for ATP.

This sequence belongs to the LpxK family.

The enzyme catalyses a lipid A disaccharide + ATP = a lipid IVA + ADP + H(+). It functions in the pathway glycolipid biosynthesis; lipid IV(A) biosynthesis; lipid IV(A) from (3R)-3-hydroxytetradecanoyl-[acyl-carrier-protein] and UDP-N-acetyl-alpha-D-glucosamine: step 6/6. Functionally, transfers the gamma-phosphate of ATP to the 4'-position of a tetraacyldisaccharide 1-phosphate intermediate (termed DS-1-P) to form tetraacyldisaccharide 1,4'-bis-phosphate (lipid IVA). This is Tetraacyldisaccharide 4'-kinase from Rickettsia rickettsii.